The sequence spans 338 residues: Cell division protein ZipA (338 aa).

The Periplasmic segment spans residues 1 to 2 (MS). A helical membrane pass occupies residues 3–23 (LREWLIAIGTLVIIGIVIDGV). The Cytoplasmic segment spans residues 24–338 (RRMRRARKES…FERKQRSQRA (315 aa)). A disordered region spans residues 33–192 (SMAISSGMGA…RKNQPLAGAN (160 aa)). Basic and acidic residues-rich tracts occupy residues 70 to 81 (TLEDRGYLKRDM) and 138 to 162 (EVDRSKTRPSVPEKAKAEPEPRAEE).

The protein belongs to the ZipA family. In terms of assembly, interacts with FtsZ via their C-terminal domains.

Its subcellular location is the cell inner membrane. Its function is as follows. Essential cell division protein that stabilizes the FtsZ protofilaments by cross-linking them and that serves as a cytoplasmic membrane anchor for the Z ring. Also required for the recruitment to the septal ring of downstream cell division proteins. This is Cell division protein ZipA from Marinobacter nauticus (strain ATCC 700491 / DSM 11845 / VT8) (Marinobacter aquaeolei).